The chain runs to 389 residues: Succinate--CoA ligase [ADP-forming] subunit beta (389 aa).

The region spanning 9-244 is the ATP-grasp domain; the sequence is KQLLAEYGIP…KTQEDPTEVI (236 aa). Residues lysine 46, 53 to 55, glycine 102, and glutamate 107 each bind ATP; that span reads GRG. Residues asparagine 199 and aspartate 213 each coordinate Mg(2+). Substrate contacts are provided by residues asparagine 264 and 321–323; that span reads GIV.

The protein belongs to the succinate/malate CoA ligase beta subunit family. Heterotetramer of two alpha and two beta subunits. It depends on Mg(2+) as a cofactor.

The enzyme catalyses succinate + ATP + CoA = succinyl-CoA + ADP + phosphate. It carries out the reaction GTP + succinate + CoA = succinyl-CoA + GDP + phosphate. Its pathway is carbohydrate metabolism; tricarboxylic acid cycle; succinate from succinyl-CoA (ligase route): step 1/1. Its function is as follows. Succinyl-CoA synthetase functions in the citric acid cycle (TCA), coupling the hydrolysis of succinyl-CoA to the synthesis of either ATP or GTP and thus represents the only step of substrate-level phosphorylation in the TCA. The beta subunit provides nucleotide specificity of the enzyme and binds the substrate succinate, while the binding sites for coenzyme A and phosphate are found in the alpha subunit. The chain is Succinate--CoA ligase [ADP-forming] subunit beta from Stenotrophomonas maltophilia (strain R551-3).